Reading from the N-terminus, the 365-residue chain is Chorismate synthase (365 aa).

2 residues coordinate NADP(+): Arg-48 and Arg-54. Residues 129-131 (RSS), 241-242 (NA), Gly-285, 300-304 (KPTSS), and Arg-326 contribute to the FMN site.

The protein belongs to the chorismate synthase family. Homotetramer. Requires FMNH2 as cofactor.

It carries out the reaction 5-O-(1-carboxyvinyl)-3-phosphoshikimate = chorismate + phosphate. It functions in the pathway metabolic intermediate biosynthesis; chorismate biosynthesis; chorismate from D-erythrose 4-phosphate and phosphoenolpyruvate: step 7/7. Functionally, catalyzes the anti-1,4-elimination of the C-3 phosphate and the C-6 proR hydrogen from 5-enolpyruvylshikimate-3-phosphate (EPSP) to yield chorismate, which is the branch point compound that serves as the starting substrate for the three terminal pathways of aromatic amino acid biosynthesis. This reaction introduces a second double bond into the aromatic ring system. In Parvibaculum lavamentivorans (strain DS-1 / DSM 13023 / NCIMB 13966), this protein is Chorismate synthase.